Here is a 338-residue protein sequence, read N- to C-terminus: L-serine dehydratase (338 aa).

Position 39 is an N6-(pyridoxal phosphate)lysine (Lys-39).

Belongs to the serine/threonine dehydratase family. The cofactor is pyridoxal 5'-phosphate.

The protein resides in the cytoplasm. The catalysed reaction is L-serine = pyruvate + NH4(+). It functions in the pathway carbohydrate biosynthesis; gluconeogenesis. The protein is L-serine dehydratase (SDL1) of Saccharomyces cerevisiae (strain YJM789) (Baker's yeast).